The chain runs to 273 residues: DnaJ homolog subfamily C member 27 (273 aa).

The segment at 1-18 is required for interaction with MAPK1; sequence METNVPKRKEPAKSLRIK. Residues 23–30, 71–75, and 134–137 contribute to the GTP site; these read GNAEVGKS, DMAGH, and NKID. A J domain is found at 217-273; the sequence is DSWEMLGVRPGASREEVNKAYRKLAVLLHPDKCVAPGSEDAFKAVVNARTALLKNIK.

Belongs to the small GTPase superfamily. Rab family. Interacts directly with MAPK1 (wild-type and kinase-deficient forms). Interacts directly (in GTP-bound form) with MAP2K1 (wild-type and kinase-deficient forms).

It is found in the nucleus. Functionally, GTPase which can activate the MEK/ERK pathway and induce cell transformation when overexpressed. May act as a nuclear scaffold for MAPK1, probably by association with MAPK1 nuclear export signal leading to enhanced ERK1/ERK2 signaling. This chain is DnaJ homolog subfamily C member 27 (Dnajc27), found in Mus musculus (Mouse).